A 101-amino-acid chain; its full sequence is NAD(P)H-quinone oxidoreductase subunit 4L, chloroplastic (101 aa).

3 helical membrane-spanning segments follow: residues 2–22 (MFEL…YGLI), 32–52 (ICLE…SDLF), and 61–81 (IFAI…LSIL).

Belongs to the complex I subunit 4L family. NDH is composed of at least 16 different subunits, 5 of which are encoded in the nucleus.

Its subcellular location is the plastid. It localises to the chloroplast thylakoid membrane. The enzyme catalyses a plastoquinone + NADH + (n+1) H(+)(in) = a plastoquinol + NAD(+) + n H(+)(out). The catalysed reaction is a plastoquinone + NADPH + (n+1) H(+)(in) = a plastoquinol + NADP(+) + n H(+)(out). NDH shuttles electrons from NAD(P)H:plastoquinone, via FMN and iron-sulfur (Fe-S) centers, to quinones in the photosynthetic chain and possibly in a chloroplast respiratory chain. The immediate electron acceptor for the enzyme in this species is believed to be plastoquinone. Couples the redox reaction to proton translocation, and thus conserves the redox energy in a proton gradient. The polypeptide is NAD(P)H-quinone oxidoreductase subunit 4L, chloroplastic (Lolium perenne (Perennial ryegrass)).